The following is a 223-amino-acid chain: Ribonuclease T (223 aa).

Positions 1–11 (MSDDHFDDEQE) are enriched in acidic residues. Residues 1 to 21 (MSDDHFDDEQEGSSGGPRHPM) form a disordered region. One can recognise an Exonuclease domain in the interval 31-205 (VVVDVETGGF…YDTEKTAELF (175 aa)). 4 residues coordinate Mg(2+): D34, E36, H192, and D197. The active-site Proton donor/acceptor is the H192.

The protein belongs to the RNase T family. Homodimer. Mg(2+) serves as cofactor.

Its function is as follows. Trims short 3' overhangs of a variety of RNA species, leaving a one or two nucleotide 3' overhang. Responsible for the end-turnover of tRNA: specifically removes the terminal AMP residue from uncharged tRNA (tRNA-C-C-A). Also appears to be involved in tRNA biosynthesis. This is Ribonuclease T from Pseudomonas fluorescens (strain ATCC BAA-477 / NRRL B-23932 / Pf-5).